We begin with the raw amino-acid sequence, 21 residues long: FINTIKLLIEKYREWKNKQSS.

S21 is subject to Serine amide.

In terms of tissue distribution, expressed by the venom gland.

The protein localises to the secreted. In Cupiennius salei (American wandering spider), this protein is Cupiennin-6d.